Reading from the N-terminus, the 423-residue chain is UDP-N-acetylglucosamine 1-carboxyvinyltransferase (423 aa).

22 to 23 (KN) is a phosphoenolpyruvate binding site. Residue arginine 93 coordinates UDP-N-acetyl-alpha-D-glucosamine. Cysteine 117 acts as the Proton donor in catalysis. Cysteine 117 bears the 2-(S-cysteinyl)pyruvic acid O-phosphothioketal mark. Residues 122–126 (RPVDL), aspartate 308, and valine 330 contribute to the UDP-N-acetyl-alpha-D-glucosamine site.

It belongs to the EPSP synthase family. MurA subfamily.

The protein resides in the cytoplasm. The catalysed reaction is phosphoenolpyruvate + UDP-N-acetyl-alpha-D-glucosamine = UDP-N-acetyl-3-O-(1-carboxyvinyl)-alpha-D-glucosamine + phosphate. The protein operates within cell wall biogenesis; peptidoglycan biosynthesis. Functionally, cell wall formation. Adds enolpyruvyl to UDP-N-acetylglucosamine. The chain is UDP-N-acetylglucosamine 1-carboxyvinyltransferase from Finegoldia magna (strain ATCC 29328 / DSM 20472 / WAL 2508) (Peptostreptococcus magnus).